The following is a 248-amino-acid chain: Leucyl/phenylalanyl-tRNA--protein transferase (248 aa).

It belongs to the L/F-transferase family.

Its subcellular location is the cytoplasm. The catalysed reaction is N-terminal L-lysyl-[protein] + L-leucyl-tRNA(Leu) = N-terminal L-leucyl-L-lysyl-[protein] + tRNA(Leu) + H(+). It catalyses the reaction N-terminal L-arginyl-[protein] + L-leucyl-tRNA(Leu) = N-terminal L-leucyl-L-arginyl-[protein] + tRNA(Leu) + H(+). It carries out the reaction L-phenylalanyl-tRNA(Phe) + an N-terminal L-alpha-aminoacyl-[protein] = an N-terminal L-phenylalanyl-L-alpha-aminoacyl-[protein] + tRNA(Phe). In terms of biological role, functions in the N-end rule pathway of protein degradation where it conjugates Leu, Phe and, less efficiently, Met from aminoacyl-tRNAs to the N-termini of proteins containing an N-terminal arginine or lysine. The protein is Leucyl/phenylalanyl-tRNA--protein transferase of Rhizorhabdus wittichii (strain DSM 6014 / CCUG 31198 / JCM 15750 / NBRC 105917 / EY 4224 / RW1) (Sphingomonas wittichii).